A 59-amino-acid chain; its full sequence is Large ribosomal subunit protein bL33 (59 aa).

The protein belongs to the bacterial ribosomal protein bL33 family.

This Borreliella afzelii (strain PKo) (Borrelia afzelii) protein is Large ribosomal subunit protein bL33.